The primary structure comprises 1158 residues: Serine/threonine/tyrosine-interacting-like protein 2 (1158 aa).

10 disordered regions span residues 1 to 21 (MATR…DEAN), 280 to 303 (EERE…GTGS), 315 to 337 (EEED…QASK), 360 to 392 (LLSD…VERI), 407 to 444 (GYRR…ESVS), 492 to 527 (SRRY…GSEA), 559 to 582 (KDLG…KNPS), 597 to 622 (QKKV…LAKK), 873 to 915 (KVKE…CSSL), and 940 to 1135 (SGLR…MDDE). The segment covering 8–19 (EEEQVVPSEEDE) has biased composition (acidic residues). One can recognise a Tyrosine-protein phosphatase domain in the interval 132–280 (NEVDEVWPNV…LRELNEKLME (149 aa)). The segment covering 322-337 (SHLSGSSLGKATQASK) has biased composition (polar residues). A Phosphoserine modification is found at serine 377. Threonine 433 is subject to Phosphothreonine. Residues 435–444 (SESSAWESVS) show a composition bias toward low complexity. The segment covering 500-517 (KREEAADRSSEAGSRVRE) has biased composition (basic and acidic residues). The residue at position 509 (serine 509) is a Phosphoserine. A compositionally biased stretch (basic and acidic residues) spans 600–619 (VGSENKEEVVELSKGEDSAL). A compositionally biased stretch (acidic residues) spans 877 to 890 (DEDDGVGDGDEDTD). 2 stretches are compositionally biased toward polar residues: residues 897-914 (RYSS…TCSS) and 952-966 (SDWS…TRSS). Low complexity predominate over residues 974-983 (KSSSYKFSKS). Serine 985 is modified (phosphoserine). Residues 990-999 (TSSYHEANGN) show a composition bias toward polar residues. A compositionally biased stretch (low complexity) spans 1000 to 1012 (SVRSTSRFSSSST). Serine 1036 is subject to Phosphoserine. Composition is skewed to basic and acidic residues over residues 1044–1056 (RTPE…ESPE), 1064–1079 (RSRD…KSDF), and 1094–1111 (RSEE…EEGR). The span at 1126-1135 (REEEEEMDDE) shows a compositional bias: acidic residues.

This sequence belongs to the protein-tyrosine phosphatase family. Non-receptor class dual specificity subfamily.

It is found in the cytoplasm. The protein resides in the myofibril. It localises to the sarcomere. May be required for myofiber maturation. The sequence is that of Serine/threonine/tyrosine-interacting-like protein 2 from Homo sapiens (Human).